We begin with the raw amino-acid sequence, 109 residues long: Mannose-specific lectin (109 aa).

Residues 25–109 (MQEDCNLVLY…ARWATGTNIH (85 aa)) enclose the Bulb-type lectin domain. Alpha-D-mannopyranose contacts are provided by Gln26, Asp28, Asn30, Tyr34, Asp37, Lys38, Trp41, Ala42, Asn44, Gln57, Asp59, Asn61, Tyr65, Ile72, Trp73, Asn76, Asn83, Gln89, Asp91, Asn93, Tyr97, and Trp102. Cysteines 29 and 52 form a disulfide.

Homotetramer; antiparallel. As to expression, detected in bulbs (at protein level).

The protein localises to the secreted. Strongly inhibited by alpha-1,6-linked mannotriose. Inhibited by various oligosaccharides of P.pastoris mannan including, Man(alpha-l,6)Man-alpha-O-Me, Man(alpha-l,2)Man, Man(alpha-l,3)Man-alpha-O-Me, Man(alpha-l,2)Man, alpha-1,2-linked mannotriose, and Man(alpha-1,6)Glc, in order of decreasing potency. Weakly inhibited by elsinotetraose. Not inhibited by maltose or nigerose. In terms of biological role, D-mannose-binding lectin which binds alpha-D-linked mannose. Displays a high affinity for alpha-(1-6)-mannose oligomers. Able to interact with both terminal and internal alpha-D-mannosyl residues. Displays antiviral activity and therefore may contribute to defense against infections. The sequence is that of Mannose-specific lectin from Narcissus pseudonarcissus (Daffodil).